A 182-amino-acid chain; its full sequence is Protein SYM1 (182 aa).

The next 3 helical transmembrane spans lie at Thr51–Tyr70, Leu98–Gly118, and Leu135–Val155.

Belongs to the peroxisomal membrane protein PXMP2/4 family.

It localises to the mitochondrion inner membrane. May be involved in cellular response to stress. Required to maintain mitochondrial DNA (mtDNA) integrity and stability. This Eremothecium gossypii (strain ATCC 10895 / CBS 109.51 / FGSC 9923 / NRRL Y-1056) (Yeast) protein is Protein SYM1 (SYM1).